Consider the following 506-residue polypeptide: BTB/POZ domain-containing protein 16 (506 aa).

Residues 150–206 enclose the BTB domain; sequence INDPAVTRVAFALALKNLYMNEVEMTVDNVLGVLASAHILQFNRLFRKCVSTMLNRL.

The chain is BTB/POZ domain-containing protein 16 (Btbd16) from Rattus norvegicus (Rat).